The primary structure comprises 451 residues: Cyclin-dependent kinase 18 (451 aa).

The interval 39–61 is disordered; that stretch reads RNEDGRDEPGQLSPGVQYQQRQN. S51 bears the Phosphoserine mark. A compositionally biased stretch (polar residues) spans 52 to 61; the sequence is PGVQYQQRQN. Phosphoserine is present on residues S66 and S109. In terms of domain architecture, Protein kinase spans 121-402; the sequence is YVKLDKLGEG…AEAALSHPYF (282 aa). Residues 127–135 and K150 each bind ATP; that span reads LGEGTYATV. D242 acts as the Proton acceptor in catalysis. 2 positions are modified to phosphoserine: S417 and S420.

The protein belongs to the protein kinase superfamily. CMGC Ser/Thr protein kinase family. CDC2/CDKX subfamily. In brain, kidney, intestine and at a much lower level, in fetal tissues.

The catalysed reaction is L-seryl-[protein] + ATP = O-phospho-L-seryl-[protein] + ADP + H(+). It carries out the reaction L-threonyl-[protein] + ATP = O-phospho-L-threonyl-[protein] + ADP + H(+). May play a role in signal transduction cascades in terminally differentiated cells. In Rattus norvegicus (Rat), this protein is Cyclin-dependent kinase 18 (Cdk18).